The sequence spans 321 residues: Calcium-regulated beta-propeller protein CarP (321 aa).

The N-terminal stretch at 1–42 is a signal peptide; it reads MTIHAQTPEPFSMSRAFTPRRLLLAVLLVALSALVLLGQSFR.

It belongs to the YjiK family.

Its subcellular location is the cell inner membrane. Functionally, plays a role in intracellular Ca(2+) homeostasis. Involved in modulating Ca(2+)-induced swarming motility and pyocyanine production. Plays a role in regulating virulence in a Ca(2+)-dependent manner. Involved in cell protection against oxidative stress in the presence of elevated Ca(2+). The protein is Calcium-regulated beta-propeller protein CarP of Pseudomonas aeruginosa (strain ATCC 15692 / DSM 22644 / CIP 104116 / JCM 14847 / LMG 12228 / 1C / PRS 101 / PAO1).